A 188-amino-acid chain; its full sequence is Ribosome-recycling factor (188 aa).

Belongs to the RRF family.

It is found in the cytoplasm. Its function is as follows. Responsible for the release of ribosomes from messenger RNA at the termination of protein biosynthesis. May increase the efficiency of translation by recycling ribosomes from one round of translation to another. This Cereibacter sphaeroides (strain ATCC 17023 / DSM 158 / JCM 6121 / CCUG 31486 / LMG 2827 / NBRC 12203 / NCIMB 8253 / ATH 2.4.1.) (Rhodobacter sphaeroides) protein is Ribosome-recycling factor.